Here is a 389-residue protein sequence, read N- to C-terminus: tRNA-specific 2-thiouridylase MnmA (389 aa).

ATP-binding positions include Gly-9–Ser-16 and Met-35. The interval Asn-95–Asp-97 is interaction with target base in tRNA. The active-site Nucleophile is Cys-100. A disulfide bond links Cys-100 and Cys-196. An ATP-binding site is contributed by Gly-124. Residues Lys-146 to Gln-148 are interaction with tRNA. The Cysteine persulfide intermediate role is filled by Cys-196. The interval Arg-308–Tyr-309 is interaction with tRNA.

It belongs to the MnmA/TRMU family.

The protein resides in the cytoplasm. The enzyme catalyses S-sulfanyl-L-cysteinyl-[protein] + uridine(34) in tRNA + AH2 + ATP = 2-thiouridine(34) in tRNA + L-cysteinyl-[protein] + A + AMP + diphosphate + H(+). Its function is as follows. Catalyzes the 2-thiolation of uridine at the wobble position (U34) of tRNA, leading to the formation of s(2)U34. This is tRNA-specific 2-thiouridylase MnmA from Burkholderia ambifaria (strain MC40-6).